We begin with the raw amino-acid sequence, 276 residues long: C-type lectin domain family 12 member B (276 aa).

Topologically, residues 1–43 (MSEEVTYATLTFQDSAGARNNRDGNNLRKRGHPAPSPIWRHAA) are cytoplasmic. The short motif at 5–10 (VTYATL) is the ITIM motif element. Residue Tyr-7 is modified to Phosphotyrosine. A helical; Signal-anchor for type II membrane protein transmembrane segment spans residues 44-64 (LGLVTLCLMLLIGLVTLGMMF). The Extracellular segment spans residues 65–276 (LQISNDINSD…AAPVKTEDLD (212 aa)). N-linked (GlcNAc...) asparagine glycans are attached at residues Asn-91, Asn-176, and Asn-237. The C-type lectin domain occupies 150-264 (YQNSCYYFTT…CSAEIFWICE (115 aa)). Cystine bridges form between Cys-172-Cys-263 and Cys-242-Cys-255.

Homodimer. Interacts (via ITIM motif) with PTPN6. Interacts (via ITIM motif) with PTPN11; this interaction triggers dephosphorylation and activation of PTPN11. N-glycosylated. As to expression, detected in colon, heart, kidney, liver, lung, mammary gland, ovary, spleen and testis. Expressed in melanocytes (at protein level).

The protein resides in the cell membrane. Functionally, inhibitory receptor postulated to negatively regulate immune and non-immune functions. Upon phosphorylation, recruits SH2 domain-containing PTPN6 and PTPN11 phosphatases to its ITIM motif and antagonizes activation signals. Although it inhibits KLRK1/NKG2D-mediated signaling, it does not bind known ligands of KLRK1/NKG2D and therefore is not its inhibitory counterpart. May limit activation of myeloid cell subsets in response to infection or tissue inflammation. May protect target cells against natural killer cell-mediated lysis. May negatively regulate cell cycle and differentiation of melanocytes via inactivation of STAT3. The chain is C-type lectin domain family 12 member B from Homo sapiens (Human).